The chain runs to 1066 residues: Exportin-T (1066 aa).

This sequence belongs to the exportin family.

The protein resides in the nucleus. Its subcellular location is the cytoplasm. TRNA nucleus export receptor which facilitates tRNA translocation across the nuclear pore complex. Involved in pre-tRNA splicing, probably by affecting the interaction of pre-tRNA with splicing endonuclease. This chain is Exportin-T (LOS1), found in Laccaria bicolor (strain S238N-H82 / ATCC MYA-4686) (Bicoloured deceiver).